We begin with the raw amino-acid sequence, 2148 residues long: Polyketide synthase 1 (2148 aa).

The tract at residues 19–261 is N-terminal acylcarrier protein transacylase domain (SAT); sequence FIFGDQSSCN…TPLAVHAPYH (243 aa). In terms of domain architecture, Ketosynthase family 3 (KS3) spans 394–829; sequence ESKIAIIGMS…GGNTALLVED (436 aa). Catalysis depends on for beta-ketoacyl synthase activity residues Cys566, His701, and His745. The segment at 929-1233 is malonyl-CoA:ACP transacylase (MAT) domain; it reads AFVFSGQGSQ…PSLMRNKDGW (305 aa). The For acyl/malonyl transferase activity role is filled by Ser1018. The segment at 1310 to 1624 is product template (PT) domain; that stretch reads TASVHRIVHE…RKVLNTAMPP (315 aa). The tract at residues 1314-1447 is N-terminal hotdog fold; sequence HRIVHESVEK…SSLHFEQPKV (134 aa). Residues 1314–1619 enclose the PKS/mFAS DH domain; that stretch reads HRIVHESVEK…FQGIPRKVLN (306 aa). The Proton acceptor; for dehydratase activity role is filled by His1346. Residues 1474–1619 form a C-terminal hotdog fold region; sequence LNSRMSSGVI…FQGIPRKVLN (146 aa). Catalysis depends on Asp1533, which acts as the Proton donor; for dehydratase activity. A disordered region spans residues 1619 to 1655; that stretch reads NTAMPPPKSQNEAPVRSGPAKPAAKPPRSASSEHSGH. The span at 1634–1650 shows a compositional bias: low complexity; it reads RSGPAKPAAKPPRSASS. Residues 1678–1752 form the Carrier 1 domain; it reads RNPMLPVFKI…DLAAHLGLDT (75 aa). An O-(pantetheine 4'-phosphoryl)serine modification is found at Ser1712. Composition is skewed to low complexity over residues 1757–1769 and 1779–1796; these read QSSG…GGLS and TSSV…SVSG. A disordered region spans residues 1757-1796; it reads QSSGQSSSFGGLSPRSDSIGEITSSVTTPPSLSPRSSVSG. In terms of domain architecture, Carrier 2 spans 1793 to 1870; sequence SVSGSQCKDV…SFKHMFQQGH (78 aa). Ser1830 carries the post-translational modification O-(pantetheine 4'-phosphoryl)serine. Residues 1882 to 2146 are thioesterase (TE) domain; that stretch reads LKQYRATSTL…ERVAAFIRST (265 aa). Ser1973 acts as the For thioesterase activity in catalysis.

Its function is as follows. Polyketide synthase; part of the Pks1 gene cluster that mediates the biosynthesis of an anthraquinone derivative pigment that contributes to conidial pigmentation that provides protection from UV radiation, heat and cold stress. The polyketide synthase Pks1 produces 1-acetyl-2,4,6,8-tetrahydroxy-9,10-anthraquinone though condensation of acetyl-CoA with malonyl-CoA. The dehydratase EthD and the laccase Mlac1 further convert the anthraquinone derivative into the final conidial pigment. This chain is Polyketide synthase 1, found in Metarhizium anisopliae (strain ARSEF 549).